The chain runs to 310 residues: MTQLAQQEKKQTYNFNKLQKRLRRNVGNAIADFGMIEDGDKVMVCLSGGKDSYTLLDILLNLQQSAPIKFDIVAVNLDQKQPGFPEHVLPEYLESIGVDYKIVQENTYGIVKEKIPEGKTTCSLCSRLRRGILYRTATELGATKIALGHHRDDMLATLFLNMFYGGKMKSMPPKLISDDGKQIVIRPLAYCKEKDIEKYAIAKKFPIIPCNLCGSQPNLQRQVVKEMLNTWDRQYPGRLETMFSAMQNITLSHMCDPKLFDFKGIKHGQLIDGIEGDTAFDEERITPMQFEDEDQTDFSNNEMINFKEVN.

The short motif at 47-52 (SGGKDS) is the PP-loop motif element. Cysteine 122, cysteine 125, and cysteine 213 together coordinate [4Fe-4S] cluster.

Belongs to the TtcA family. As to quaternary structure, homodimer. Mg(2+) is required as a cofactor. The cofactor is [4Fe-4S] cluster.

It localises to the cytoplasm. The enzyme catalyses cytidine(32) in tRNA + S-sulfanyl-L-cysteinyl-[cysteine desulfurase] + AH2 + ATP = 2-thiocytidine(32) in tRNA + L-cysteinyl-[cysteine desulfurase] + A + AMP + diphosphate + H(+). The protein operates within tRNA modification. Functionally, catalyzes the ATP-dependent 2-thiolation of cytidine in position 32 of tRNA, to form 2-thiocytidine (s(2)C32). The sulfur atoms are provided by the cysteine/cysteine desulfurase (IscS) system. This is tRNA-cytidine(32) 2-sulfurtransferase from Haemophilus influenzae (strain PittEE).